The primary structure comprises 626 residues: 1-deoxy-D-xylulose-5-phosphate synthase 2 (626 aa).

Residues His-74 and 115 to 117 each bind thiamine diphosphate; that span reads GHA. Asp-146 is a Mg(2+) binding site. Residues 147-148, Asn-175, Phe-286, and Glu-368 each bind thiamine diphosphate; that span reads GS. Mg(2+) is bound at residue Asn-175.

Belongs to the transketolase family. DXPS subfamily. Homodimer. It depends on Mg(2+) as a cofactor. The cofactor is thiamine diphosphate.

The catalysed reaction is D-glyceraldehyde 3-phosphate + pyruvate + H(+) = 1-deoxy-D-xylulose 5-phosphate + CO2. Its pathway is metabolic intermediate biosynthesis; 1-deoxy-D-xylulose 5-phosphate biosynthesis; 1-deoxy-D-xylulose 5-phosphate from D-glyceraldehyde 3-phosphate and pyruvate: step 1/1. Its function is as follows. Catalyzes the acyloin condensation reaction between C atoms 2 and 3 of pyruvate and glyceraldehyde 3-phosphate to yield 1-deoxy-D-xylulose-5-phosphate (DXP). This Geobacter sulfurreducens (strain ATCC 51573 / DSM 12127 / PCA) protein is 1-deoxy-D-xylulose-5-phosphate synthase 2.